The primary structure comprises 253 residues: Neurotrophin-3 (253 aa).

The N-terminal stretch at 1 to 18 (MSILFYVMFLAYLRGVQG) is a signal peptide. A propeptide spanning residues 19–134 (NSMDQRSLPE…AANRTSRRKR (116 aa)) is cleaved from the precursor. Residues 62 to 89 (TLPKAEAPPREPAKSEFQPVTAMGPELL) form a disordered region. N127 carries an N-linked (GlcNAc...) asparagine glycan. 3 cysteine pairs are disulfide-bonded: C148–C213, C191–C242, and C201–C244.

This sequence belongs to the NGF-beta family.

It localises to the secreted. Seems to promote the survival of visceral and proprioceptive sensory neurons. This Bos taurus (Bovine) protein is Neurotrophin-3 (NTF3).